Consider the following 86-residue polypeptide: MHQRCFGLRASLSIFKAFAVTLAASVFLQVVYFLSLLFMSFRPTRESDRSIHSGTRQADQPQKRDRDKTEQSNVPKLDPRRKRRTP.

A helical membrane pass occupies residues 18–38 (FAVTLAASVFLQVVYFLSLLF). A disordered region spans residues 44 to 86 (TRESDRSIHSGTRQADQPQKRDRDKTEQSNVPKLDPRRKRRTP). A compositionally biased stretch (basic and acidic residues) spans 61-70 (PQKRDRDKTE).

The protein localises to the cell membrane. The protein operates within glycan metabolism; exopolysaccharide biosynthesis. Functionally, inhibition of exopolysaccharide synthesis (EPS) and nodulation ability (NOD). In Rhizobium leguminosarum bv. phaseoli, this protein is Exopolysaccharide production repressor protein (exoX).